Consider the following 518-residue polypeptide: Ell-associated factor Eaf (518 aa).

2 stretches are compositionally biased toward polar residues: residues 119–128 and 163–182; these read KTRSEMTNKP and ENST…SRRN. 2 disordered regions span residues 119–216 and 241–518; these read KTRS…PAWH and ALHN…DDDD. S192 is subject to Phosphoserine. 2 stretches are compositionally biased toward polar residues: residues 253 to 265 and 274 to 284; these read ANIS…SSVG and MGKQRQASSQG. Residues 289–342 show a composition bias toward low complexity; the sequence is QQQTQRSSPPMQQQQQQQNYGRGGANNNYAQQLHQQQQQQQQQQLQQQQQQMQQ. The segment covering 343–355 has biased composition (polar residues); sequence RASFSHSNHSNSM. Positions 368–377 are enriched in low complexity; that stretch reads AAQSMAQAAA. Residues 397 to 412 are compositionally biased toward acidic residues; the sequence is ESSDSDSGSDSDDSTE. 3 stretches are compositionally biased toward low complexity: residues 418–428, 463–476, and 500–518; these read HQQQQPPGQLS, QQQQ…QQQQ, and NDLL…DDDD.

The protein belongs to the EAF family.

The protein resides in the nucleus. In terms of biological role, promotes transcriptional elongation by Su(Tpl)/ELL. Essential for development. The sequence is that of Ell-associated factor Eaf from Drosophila mojavensis (Fruit fly).